We begin with the raw amino-acid sequence, 389 residues long: Chalcone synthase 1 (389 aa).

Residue Cys163 is part of the active site.

This sequence belongs to the thiolase-like superfamily. Chalcone/stilbene synthases family.

It carries out the reaction (E)-4-coumaroyl-CoA + 3 malonyl-CoA + 3 H(+) = 2',4,4',6'-tetrahydroxychalcone + 3 CO2 + 4 CoA. Its pathway is secondary metabolite biosynthesis; flavonoid biosynthesis. Its function is as follows. The primary product of this enzyme is 4,2',4',6'-tetrahydroxychalcone (also termed naringenin-chalcone or chalcone) which can under specific conditions spontaneously isomerize into naringenin. This chain is Chalcone synthase 1 (CHS1), found in Citrus sinensis (Sweet orange).